The sequence spans 428 residues: Kynureninase (428 aa).

Residues threonine 104, threonine 105, 132–135 (FPSD), aspartate 213, histidine 216, and tyrosine 238 each bind pyridoxal 5'-phosphate. Lysine 239 carries the post-translational modification N6-(pyridoxal phosphate)lysine. Pyridoxal 5'-phosphate-binding residues include tryptophan 267 and threonine 295.

Belongs to the kynureninase family. As to quaternary structure, homodimer. It depends on pyridoxal 5'-phosphate as a cofactor.

It carries out the reaction L-kynurenine + H2O = anthranilate + L-alanine + H(+). It catalyses the reaction 3-hydroxy-L-kynurenine + H2O = 3-hydroxyanthranilate + L-alanine + H(+). Its pathway is amino-acid degradation; L-kynurenine degradation; L-alanine and anthranilate from L-kynurenine: step 1/1. It participates in cofactor biosynthesis; NAD(+) biosynthesis; quinolinate from L-kynurenine: step 2/3. Catalyzes the cleavage of L-kynurenine (L-Kyn) and L-3-hydroxykynurenine (L-3OHKyn) into anthranilic acid (AA) and 3-hydroxyanthranilic acid (3-OHAA), respectively. The protein is Kynureninase of Bacillus cereus (strain ZK / E33L).